Consider the following 282-residue polypeptide: Ribosomal protein L11 methyltransferase (282 aa).

S-adenosyl-L-methionine contacts are provided by Thr-133, Gly-154, Asp-175, and Asn-216.

The protein belongs to the methyltransferase superfamily. PrmA family.

The protein localises to the cytoplasm. The enzyme catalyses L-lysyl-[protein] + 3 S-adenosyl-L-methionine = N(6),N(6),N(6)-trimethyl-L-lysyl-[protein] + 3 S-adenosyl-L-homocysteine + 3 H(+). Methylates ribosomal protein L11. In Campylobacter jejuni subsp. doylei (strain ATCC BAA-1458 / RM4099 / 269.97), this protein is Ribosomal protein L11 methyltransferase.